A 262-amino-acid chain; its full sequence is 4-hydroxy-2-oxo-heptane-1,7-dioate aldolase (262 aa).

Residue His-45 is the Proton acceptor of the active site. Gln-147 is a substrate binding site. An a divalent metal cation-binding site is contributed by Glu-149. Ala-174 and Asp-175 together coordinate substrate. Residue Asp-175 participates in a divalent metal cation binding.

This sequence belongs to the HpcH/HpaI aldolase family. In terms of assembly, homohexamer; trimer of dimers. It depends on a divalent metal cation as a cofactor.

The enzyme catalyses 4-hydroxy-2-oxoheptanedioate = succinate semialdehyde + pyruvate. It participates in aromatic compound metabolism; 4-hydroxyphenylacetate degradation; pyruvate and succinate semialdehyde from 4-hydroxyphenylacetate: step 7/7. In terms of biological role, catalyzes the reversible retro-aldol cleavage of 4-hydroxy-2-ketoheptane-1,7-dioate (HKHD) to pyruvate and succinic semialdehyde. In Shigella sonnei (strain Ss046), this protein is 4-hydroxy-2-oxo-heptane-1,7-dioate aldolase.